The sequence spans 244 residues: 1-(5-phosphoribosyl)-5-[(5-phosphoribosylamino)methylideneamino] imidazole-4-carboxamide isomerase (244 aa).

Aspartate 8 functions as the Proton acceptor in the catalytic mechanism. Aspartate 131 (proton donor) is an active-site residue.

Belongs to the HisA/HisF family.

Its subcellular location is the cytoplasm. The enzyme catalyses 1-(5-phospho-beta-D-ribosyl)-5-[(5-phospho-beta-D-ribosylamino)methylideneamino]imidazole-4-carboxamide = 5-[(5-phospho-1-deoxy-D-ribulos-1-ylimino)methylamino]-1-(5-phospho-beta-D-ribosyl)imidazole-4-carboxamide. The protein operates within amino-acid biosynthesis; L-histidine biosynthesis; L-histidine from 5-phospho-alpha-D-ribose 1-diphosphate: step 4/9. This Thermomicrobium roseum (strain ATCC 27502 / DSM 5159 / P-2) protein is 1-(5-phosphoribosyl)-5-[(5-phosphoribosylamino)methylideneamino] imidazole-4-carboxamide isomerase.